Here is a 183-residue protein sequence, read N- to C-terminus: Orotate phosphoribosyltransferase (183 aa).

5-phospho-alpha-D-ribose 1-diphosphate is bound by residues Arg-100, Lys-101, Lys-104, His-106, and 126–134 (EDVVTTGSS). Orotate-binding residues include Thr-130 and Arg-158.

This sequence belongs to the purine/pyrimidine phosphoribosyltransferase family. PyrE subfamily. In terms of assembly, homodimer. The cofactor is Mg(2+).

It catalyses the reaction orotidine 5'-phosphate + diphosphate = orotate + 5-phospho-alpha-D-ribose 1-diphosphate. It functions in the pathway pyrimidine metabolism; UMP biosynthesis via de novo pathway; UMP from orotate: step 1/2. In terms of biological role, catalyzes the transfer of a ribosyl phosphate group from 5-phosphoribose 1-diphosphate to orotate, leading to the formation of orotidine monophosphate (OMP). This chain is Orotate phosphoribosyltransferase, found in Aquifex aeolicus (strain VF5).